Consider the following 342-residue polypeptide: Protein RecA 1 (342 aa).

68–75 serves as a coordination point for ATP; the sequence is GNESSGKT.

The protein belongs to the RecA family.

Its subcellular location is the cytoplasm. Functionally, can catalyze the hydrolysis of ATP in the presence of single-stranded DNA, the ATP-dependent uptake of single-stranded DNA by duplex DNA, and the ATP-dependent hybridization of homologous single-stranded DNAs. It interacts with LexA causing its activation and leading to its autocatalytic cleavage. The sequence is that of Protein RecA 1 from Myxococcus xanthus.